Consider the following 514-residue polypeptide: Glucose-6-phosphate 1-dehydrogenase 2 (514 aa).

NADP(+)-binding residues include Arg-69 and Lys-176. Residues His-206, Lys-210, Glu-244, and Asp-263 each coordinate substrate. His-268 serves as the catalytic Proton acceptor. Position 366 (Lys-366) interacts with substrate.

The protein belongs to the glucose-6-phosphate dehydrogenase family.

The catalysed reaction is D-glucose 6-phosphate + NADP(+) = 6-phospho-D-glucono-1,5-lactone + NADPH + H(+). It participates in carbohydrate degradation; pentose phosphate pathway; D-ribulose 5-phosphate from D-glucose 6-phosphate (oxidative stage): step 1/3. Its function is as follows. Catalyzes the oxidation of glucose 6-phosphate to 6-phosphogluconolactone. This Mycobacterium bovis (strain ATCC BAA-935 / AF2122/97) protein is Glucose-6-phosphate 1-dehydrogenase 2.